Here is a 131-residue protein sequence, read N- to C-terminus: Small ribosomal subunit protein uS8 (131 aa).

This sequence belongs to the universal ribosomal protein uS8 family. As to quaternary structure, part of the 30S ribosomal subunit. Contacts proteins S5 and S12.

In terms of biological role, one of the primary rRNA binding proteins, it binds directly to 16S rRNA central domain where it helps coordinate assembly of the platform of the 30S subunit. This chain is Small ribosomal subunit protein uS8, found in Methylobacillus flagellatus (strain ATCC 51484 / DSM 6875 / VKM B-1610 / KT).